Here is a 631-residue protein sequence, read N- to C-terminus: MEGVLQTRGLLSLPSKPKIKAFYPLPQGGLRNRFNSLSSLKPNPLNGVSLSSNGFQKVQGFDTKPQLFGQKKRCFPICKAEAAAAAGAADGQPLFVEKEQPKFMGIELVTLKKIIPLGAMFFCILFNYTILRDTKDVLVVTAKGSSAEIIPFLKTWVNLPMAIGFMLLYTKLANVLSKEALFYTVILPFIAFFGAFGFVLYPLSNYFHPTAFADKLLNTLGPRFLGPIAILRIWSFCLFYVMAELWGSVVVSVLFWGFANQITTVDEAKRFYPLFGLGANVALIFSGRTVKYFSSLRSSLGPGVDGWAISLKGMMSIVVMMGGAICFFYWWVNRNVALPTRSKKKKVKPNMTTMESLKFLVSSKYIRDLATLVVAYGISINLVEVTWKSKLKAQFPSPNEYSSFMGDFSTATGIATFTMMLLSQWIFDKYGWGAAAKITPTVLLLTGVGFFSLLLFGAPLAPTLAKFGMTPLLAAVYVGAMQNIFSKSAKYSLFDPCKEMAYIPLDEDTKVKGKAAIDVVCNPLGKSGGALIQQFMILTFGSLASSTPYLGGVLLVIVLAWLGAAKSLDGQFTQLRQEEDLEKEMERASLKIPVVSQNENGNGPLSSESSLNPAGGDSTNASSEPSSPRSL.

A run of 11 helical transmembrane segments spans residues 106–126, 149–169, 180–200, 238–258, 271–290, 313–333, 369–389, 407–427, 442–462, 465–485, and 543–563; these read IELV…CILF, IIPF…MLLY, ALFY…GFVL, LFYV…FWGF, FYPL…GRTV, GMMS…WWVN, LATL…TWKS, DFST…QWIF, VLLL…PLAP, AKFG…QNIF, and LASS…AWLG. Residues 586-631 are disordered; that stretch reads ERASLKIPVVSQNENGNGPLSSESSLNPAGGDSTNASSEPSSPRSL. The span at 595-631 shows a compositional bias: polar residues; the sequence is VSQNENGNGPLSSESSLNPAGGDSTNASSEPSSPRSL.

Belongs to the ADP/ATP translocase tlc (TC 2.A.12.2) family.

It is found in the plastid. The protein resides in the chloroplast membrane. The polypeptide is Plastidic ATP/ADP-transporter (Solanum tuberosum (Potato)).